Consider the following 317-residue polypeptide: Testis-expressed protein 19.2 (317 aa).

Acidic residues predominate over residues M64 to E75. The disordered stretch occupies residues M64–Q113. An important for interaction with piRNA region spans residues Q101–L145.

As to quaternary structure, interacts with UBR2. Interacts with piRNA-associated proteins DDX4, EDC4, MAEL, PIWIL1, PIWIL2, RANBP9 and TDRD6. In terms of tissue distribution, specifically expressed in somatic cells of male gonad lineage.

Its subcellular location is the cytoplasm. May be required during spermatogenesis, probably by participating in the repression of retrotransposable elements and prevent their mobilization. With its paralog, Tex19.1, collaborates with the Piwi-interacting RNA (piRNA) pathway, which mediates the repression of transposable elements during meiosis by forming complexes composed of piRNAs and Piwi proteins. Interacts with Piwi proteins and directly binds piRNAs, a class of 24 to 30 nucleotide RNAs that are generated by a Dicer-independent mechanism and are primarily derived from transposons and other repeated sequence elements. The protein is Testis-expressed protein 19.2 (Tex19.2) of Mus musculus (Mouse).